The primary structure comprises 191 residues: dTTP/UTP pyrophosphatase (191 aa).

The active-site Proton acceptor is the Asp-69.

It belongs to the Maf family. YhdE subfamily. A divalent metal cation serves as cofactor.

Its subcellular location is the cytoplasm. The catalysed reaction is dTTP + H2O = dTMP + diphosphate + H(+). It carries out the reaction UTP + H2O = UMP + diphosphate + H(+). Functionally, nucleoside triphosphate pyrophosphatase that hydrolyzes dTTP and UTP. May have a dual role in cell division arrest and in preventing the incorporation of modified nucleotides into cellular nucleic acids. The chain is dTTP/UTP pyrophosphatase from Desulforamulus reducens (strain ATCC BAA-1160 / DSM 100696 / MI-1) (Desulfotomaculum reducens).